Here is a 68-residue protein sequence, read N- to C-terminus: U1-agatoxin-Ta1c (68 aa).

The N-terminal stretch at 1–17 is a signal peptide; sequence MKLQLMICLVLLPCFFC. 3 disulfide bridges follow: Cys23-Cys53, Cys39-Cys49, and Cys42-Cys62. The residue at position 67 (Lys67) is a Lysine amide.

This sequence belongs to the helical arthropod-neuropeptide-derived (HAND) family. In terms of tissue distribution, expressed by the venom gland.

Its subcellular location is the secreted. Its function is as follows. Toxin that paralyzes insects. May have a direct effect on the insect central nervous system. The protein is U1-agatoxin-Ta1c of Eratigena agrestis (Hobo spider).